The sequence spans 514 residues: Maturase K (514 aa).

It belongs to the intron maturase 2 family. MatK subfamily.

The protein localises to the plastid. It is found in the chloroplast. In terms of biological role, usually encoded in the trnK tRNA gene intron. Probably assists in splicing its own and other chloroplast group II introns. The sequence is that of Maturase K from Erythronium grandiflorum (Yellow avalanche-lily).